A 441-amino-acid polypeptide reads, in one-letter code: Probable D-serine dehydratase (441 aa).

N6-(pyridoxal phosphate)lysine is present on Lys-117.

It belongs to the serine/threonine dehydratase family. DsdA subfamily. The cofactor is pyridoxal 5'-phosphate.

The catalysed reaction is D-serine = pyruvate + NH4(+). This chain is Probable D-serine dehydratase, found in Acinetobacter baylyi (strain ATCC 33305 / BD413 / ADP1).